The primary structure comprises 482 residues: Glutamyl-tRNA(Gln) amidotransferase subunit A (482 aa).

Residues Lys-75 and Ser-150 each act as charge relay system in the active site. Ser-174 (acyl-ester intermediate) is an active-site residue.

It belongs to the amidase family. GatA subfamily. Heterotrimer of A, B and C subunits.

It carries out the reaction L-glutamyl-tRNA(Gln) + L-glutamine + ATP + H2O = L-glutaminyl-tRNA(Gln) + L-glutamate + ADP + phosphate + H(+). Its function is as follows. Allows the formation of correctly charged Gln-tRNA(Gln) through the transamidation of misacylated Glu-tRNA(Gln) in organisms which lack glutaminyl-tRNA synthetase. The reaction takes place in the presence of glutamine and ATP through an activated gamma-phospho-Glu-tRNA(Gln). The protein is Glutamyl-tRNA(Gln) amidotransferase subunit A of Cyanothece sp. (strain PCC 7425 / ATCC 29141).